We begin with the raw amino-acid sequence, 400 residues long: Nicotinate phosphoribosyltransferase (400 aa).

Histidine 220 is modified (phosphohistidine; by autocatalysis).

It belongs to the NAPRTase family. In terms of processing, transiently phosphorylated on a His residue during the reaction cycle. Phosphorylation strongly increases the affinity for substrates and increases the rate of nicotinate D-ribonucleotide production. Dephosphorylation regenerates the low-affinity form of the enzyme, leading to product release.

It carries out the reaction nicotinate + 5-phospho-alpha-D-ribose 1-diphosphate + ATP + H2O = nicotinate beta-D-ribonucleotide + ADP + phosphate + diphosphate. It functions in the pathway cofactor biosynthesis; NAD(+) biosynthesis; nicotinate D-ribonucleotide from nicotinate: step 1/1. Functionally, catalyzes the synthesis of beta-nicotinate D-ribonucleotide from nicotinate and 5-phospho-D-ribose 1-phosphate at the expense of ATP. The chain is Nicotinate phosphoribosyltransferase from Shigella boydii serotype 18 (strain CDC 3083-94 / BS512).